The following is a 130-amino-acid chain: Small ribosomal subunit protein uS11 (130 aa).

The protein belongs to the universal ribosomal protein uS11 family. As to quaternary structure, part of the 30S ribosomal subunit. Interacts with proteins S7 and S18. Binds to IF-3.

Functionally, located on the platform of the 30S subunit, it bridges several disparate RNA helices of the 16S rRNA. Forms part of the Shine-Dalgarno cleft in the 70S ribosome. In Nitrobacter hamburgensis (strain DSM 10229 / NCIMB 13809 / X14), this protein is Small ribosomal subunit protein uS11.